Reading from the N-terminus, the 374-residue chain is MESSPVNCLPPDSLHQIFSSLPIRDIMICRSVCKFFNQLLTSQCFIEIISTRPPLNLLALRPPHHHHSHRHSGNGHATNIRPYIHVYDPEQNQWFRFNLDFLPFRSPQPVASSSGLIYLWGDSIDLAESSKSLVACNPLTRQFKVLPQLGSAWSRHGTVLVDSVNRVMVLTELAALYYSGTVVANQWLKFSSNLPSKPRSPVLMSSSVFALCDVGSPWRSQWKLFSCKLTNLTITHTNWVCLEKHEWGDIFDIIKRPRLLRGNGDSKLLMIGGLKSTFSLNPACSTILILRLDLESLEWEEAGRMPLEMYRGFQESSKFKVFGGGDRVYFSAKRMGKLAMWDCWQGWRWIEGVPGYADGLCRGFVFDAKLTLMP.

An F-box domain is found at 3–48 (SSPVNCLPPDSLHQIFSSLPIRDIMICRSVCKFFNQLLTSQCFIEI).

Part of a SCF (ASK-cullin-F-box) protein ligase complex. Interacts with SKP1A/ASK1, SKP1B/ASK2, ASK11 and ASK13.

The protein resides in the nucleus. Its pathway is protein modification; protein ubiquitination. In terms of biological role, component of SCF(ASK-cullin-F-box) E3 ubiquitin ligase complexes, which may mediate the ubiquitination and subsequent proteasomal degradation of target proteins. The protein is SKP1-interacting partner 15 (SKIP15) of Arabidopsis thaliana (Mouse-ear cress).